The primary structure comprises 310 residues: Protein FAM153A (310 aa).

Disordered regions lie at residues Leu-39–Pro-58, Gln-108–Glu-136, Ser-156–Glu-184, and Thr-250–Arg-297. Positions Ser-259–Glu-268 are enriched in low complexity. Basic and acidic residues predominate over residues Ala-270 to Thr-282. The segment covering Arg-283–Arg-297 has biased composition (basic residues).

It belongs to the FAM153 family.

This chain is Protein FAM153A (FAM153A), found in Homo sapiens (Human).